Reading from the N-terminus, the 336-residue chain is D-erythrose-4-phosphate dehydrogenase (336 aa).

Position 11–12 (11–12 (RI)) interacts with NAD(+). Substrate is bound by residues 153–155 (SCT), Arg199, 212–213 (TK), and Arg235. The Nucleophile role is filled by Cys154. Residue Asn317 participates in NAD(+) binding.

This sequence belongs to the glyceraldehyde-3-phosphate dehydrogenase family. Epd subfamily. Homotetramer.

It is found in the cytoplasm. The catalysed reaction is D-erythrose 4-phosphate + NAD(+) + H2O = 4-phospho-D-erythronate + NADH + 2 H(+). Its pathway is cofactor biosynthesis; pyridoxine 5'-phosphate biosynthesis; pyridoxine 5'-phosphate from D-erythrose 4-phosphate: step 1/5. Catalyzes the NAD-dependent conversion of D-erythrose 4-phosphate to 4-phosphoerythronate. The chain is D-erythrose-4-phosphate dehydrogenase from Aeromonas salmonicida (strain A449).